A 201-amino-acid polypeptide reads, in one-letter code: ATP-dependent Clp protease proteolytic subunit (201 aa).

The Nucleophile role is filled by serine 101. Histidine 126 is an active-site residue.

Belongs to the peptidase S14 family. In terms of assembly, component of the chloroplastic Clp protease core complex.

Its subcellular location is the plastid. It is found in the chloroplast stroma. It catalyses the reaction Hydrolysis of proteins to small peptides in the presence of ATP and magnesium. alpha-casein is the usual test substrate. In the absence of ATP, only oligopeptides shorter than five residues are hydrolyzed (such as succinyl-Leu-Tyr-|-NHMec, and Leu-Tyr-Leu-|-Tyr-Trp, in which cleavage of the -Tyr-|-Leu- and -Tyr-|-Trp bonds also occurs).. Cleaves peptides in various proteins in a process that requires ATP hydrolysis. Has a chymotrypsin-like activity. Plays a major role in the degradation of misfolded proteins. This is ATP-dependent Clp protease proteolytic subunit from Staurastrum punctulatum (Green alga).